The following is a 438-amino-acid chain: 23S rRNA (uracil(1939)-C(5))-methyltransferase RlmD (438 aa).

The 59-residue stretch at 11 to 69 (LQPESKHQQVLVEKLDHQGAGIAYLNKKPLFIDGTLPGEEVVTQLTESKSKFARGKLIK) folds into the TRAM domain. Cysteine 82, cysteine 88, cysteine 91, and cysteine 169 together coordinate [4Fe-4S] cluster. Residues glutamine 272, phenylalanine 301, asparagine 306, glutamate 322, asparagine 349, and aspartate 370 each coordinate S-adenosyl-L-methionine. Catalysis depends on cysteine 396, which acts as the Nucleophile.

It belongs to the class I-like SAM-binding methyltransferase superfamily. RNA M5U methyltransferase family. RlmD subfamily.

It catalyses the reaction uridine(1939) in 23S rRNA + S-adenosyl-L-methionine = 5-methyluridine(1939) in 23S rRNA + S-adenosyl-L-homocysteine + H(+). In terms of biological role, catalyzes the formation of 5-methyl-uridine at position 1939 (m5U1939) in 23S rRNA. The sequence is that of 23S rRNA (uracil(1939)-C(5))-methyltransferase RlmD from Vibrio vulnificus (strain YJ016).